Consider the following 1280-residue polypeptide: Fibronectin type III domain-containing protein (1280 aa).

An N-terminal signal peptide occupies residues 1–19; sequence MWQILLAISIFSLSKLSNA. Over 20 to 1156 the chain is Extracellular; the sequence is QQQPKVAPPQ…RVSTPIYQSA (1137 aa). 5 disulfide bridges follow: Cys58-Cys111, Cys268-Cys321, Cys369-Cys417, Cys460-Cys511, and Cys553-Cys604. 5 Fibronectin type-III domains span residues 628 to 722, 730 to 824, 830 to 933, 939 to 1033, and 1039 to 1131; these read PFPP…TGSF, PEKW…VKQF, PTGK…VAAD, PGPP…TEKT, and PAKP…PASD. The segment covering 1118 to 1130 has biased composition (polar residues); it reads YPSQENPQESPAS. The tract at residues 1118–1144 is disordered; that stretch reads YPSQENPQESPASDITEARPRPGISNV. A helical transmembrane segment spans residues 1157 to 1177; sequence WFIALLVLIALLLLVLLTFVL. At 1178–1280 the chain is on the cytoplasmic side; sequence YTRHQGAKYL…KDPSSLATFV (103 aa). The segment at 1206–1280 is disordered; the sequence is DEEEGSFSNN…KDPSSLATFV (75 aa). Over residues 1262–1273 the composition is skewed to basic and acidic residues; that stretch reads DEKKAPPEEKDP.

As to expression, component of the acid-insoluble organic matrix of the aragonitic skeleton (at protein level).

Its subcellular location is the membrane. This Acropora millepora (Staghorn coral) protein is Fibronectin type III domain-containing protein.